Here is a 27-residue protein sequence, read N- to C-terminus: Potassium channel toxin alpha-KTx 32.1 (27 aa).

Disulfide bonds link Cys-5-Cys-18 and Cys-12-Cys-25.

In terms of tissue distribution, expressed by the venom gland.

The protein resides in the secreted. In terms of biological role, blocker of voltage-gated potassium channels. Inhibits voltage-gated potassium channels Kv1.2/KCNA2 (Kd=0.96 nM) and Kv1.3/KCNA3 (Kd=1.3 nM). Does not inhibit Kv1.1/KCNA1, Kv1.5/KCNA5, Kv11.1/KCNH2/ERG1, KCa1.1/KCNMA1, KCa3.1/KCNN4, NaV1.5/SCN5A, NaV1.4/SCN4A or HV1/HVCN1. Strongly inhibits the expression of the activation markers interleukin-2 receptor and CD40 ligand/CD40LG in anti-CD3-activated CD4(+) TEM lymphocytes. The sequence is that of Potassium channel toxin alpha-KTx 32.1 from Centruroides margaritatus (Central American bark Scorpion).